The sequence spans 295 residues: 3-methyl-2-oxobutanoate hydroxymethyltransferase (295 aa).

Mg(2+)-binding residues include Asp-53 and Asp-92. Residues 53–54 (DS), Asp-92, and Lys-122 each bind 3-methyl-2-oxobutanoate. Glu-124 is a Mg(2+) binding site. Residue Glu-191 is the Proton acceptor of the active site.

It belongs to the PanB family. In terms of assembly, homodecamer; pentamer of dimers. It depends on Mg(2+) as a cofactor.

It is found in the cytoplasm. The enzyme catalyses 3-methyl-2-oxobutanoate + (6R)-5,10-methylene-5,6,7,8-tetrahydrofolate + H2O = 2-dehydropantoate + (6S)-5,6,7,8-tetrahydrofolate. It participates in cofactor biosynthesis; (R)-pantothenate biosynthesis; (R)-pantoate from 3-methyl-2-oxobutanoate: step 1/2. Its function is as follows. Catalyzes the reversible reaction in which hydroxymethyl group from 5,10-methylenetetrahydrofolate is transferred onto alpha-ketoisovalerate to form ketopantoate. This is 3-methyl-2-oxobutanoate hydroxymethyltransferase from Koribacter versatilis (strain Ellin345).